The primary structure comprises 303 residues: Major fimbrium anchoring subunit FimB (303 aa).

The first 22 residues, 1-22 (MNDAKKYIVSVLILLVAGMFGG), serve as a signal peptide directing secretion. The N-palmitoyl cysteine moiety is linked to residue Cys-23. A lipid anchor (S-diacylglycerol cysteine) is attached at Cys-23.

Belongs to the bacteroidetes fimbrillin superfamily. FimB/Mfa2 family. As to quaternary structure, fimB is not part of the fimbrium itself, but anchors the fimbrium in the outer membrane. Linear, head-to-tail oligomerization of fimbrial subunits mediates assembly of the fimbrium stalk, while the minor components FimC, FimD and FimE probably form the fimbrium tip. The anchoring subunit FimB limits fimbrium length and is important for solid fimbrium attachment to the outer membrane. In its absence, the major fimbriae become very long and are easily detached from the membrane.

The protein resides in the cell outer membrane. Its function is as follows. Anchoring subunit of the major fimbriae. Regulates fimbrial length. These filamentous pili are attached to the cell surface; they mediate biofilm formation, adhesion onto host cells and onto other bacteria that are part of the oral microbiome. Fimbriae of P.gingivalis are major virulence factors. This Porphyromonas gingivalis (strain ATCC BAA-308 / W83) protein is Major fimbrium anchoring subunit FimB.